A 397-amino-acid polypeptide reads, in one-letter code: Succinate--CoA ligase [ADP-forming] subunit beta (397 aa).

The region spanning 9 to 254 (KALLKSFGAP…ETEQDAKELE (246 aa)) is the ATP-grasp domain. Residues Lys-46, 53–55 (GRG), Glu-109, Ala-112, and Glu-117 each bind ATP. Mg(2+)-binding residues include Asn-209 and Asp-223. Substrate is bound by residues Asn-274 and 331 to 333 (GIM).

Belongs to the succinate/malate CoA ligase beta subunit family. Heterotetramer of two alpha and two beta subunits. Mg(2+) serves as cofactor.

The enzyme catalyses succinate + ATP + CoA = succinyl-CoA + ADP + phosphate. The catalysed reaction is GTP + succinate + CoA = succinyl-CoA + GDP + phosphate. Its pathway is carbohydrate metabolism; tricarboxylic acid cycle; succinate from succinyl-CoA (ligase route): step 1/1. Succinyl-CoA synthetase functions in the citric acid cycle (TCA), coupling the hydrolysis of succinyl-CoA to the synthesis of either ATP or GTP and thus represents the only step of substrate-level phosphorylation in the TCA. The beta subunit provides nucleotide specificity of the enzyme and binds the substrate succinate, while the binding sites for coenzyme A and phosphate are found in the alpha subunit. In Hyphomonas neptunium (strain ATCC 15444), this protein is Succinate--CoA ligase [ADP-forming] subunit beta.